We begin with the raw amino-acid sequence, 230 residues long: Protein GrpE (230 aa).

Disordered regions lie at residues 1-28 (MADE…EALK) and 209-230 (GVSK…EDNA). Residues 221-230 (NGASTSEDNA) show a composition bias toward polar residues.

The protein belongs to the GrpE family. Homodimer.

The protein localises to the cytoplasm. Participates actively in the response to hyperosmotic and heat shock by preventing the aggregation of stress-denatured proteins, in association with DnaK and GrpE. It is the nucleotide exchange factor for DnaK and may function as a thermosensor. Unfolded proteins bind initially to DnaJ; upon interaction with the DnaJ-bound protein, DnaK hydrolyzes its bound ATP, resulting in the formation of a stable complex. GrpE releases ADP from DnaK; ATP binding to DnaK triggers the release of the substrate protein, thus completing the reaction cycle. Several rounds of ATP-dependent interactions between DnaJ, DnaK and GrpE are required for fully efficient folding. This Brucella ovis (strain ATCC 25840 / 63/290 / NCTC 10512) protein is Protein GrpE.